We begin with the raw amino-acid sequence, 145 residues long: D-aminoacyl-tRNA deacylase (145 aa).

The Gly-cisPro motif, important for rejection of L-amino acids motif lies at 137 to 138 (GP).

It belongs to the DTD family. As to quaternary structure, homodimer.

The protein localises to the cytoplasm. The catalysed reaction is glycyl-tRNA(Ala) + H2O = tRNA(Ala) + glycine + H(+). It catalyses the reaction a D-aminoacyl-tRNA + H2O = a tRNA + a D-alpha-amino acid + H(+). Its function is as follows. An aminoacyl-tRNA editing enzyme that deacylates mischarged D-aminoacyl-tRNAs. Also deacylates mischarged glycyl-tRNA(Ala), protecting cells against glycine mischarging by AlaRS. Acts via tRNA-based rather than protein-based catalysis; rejects L-amino acids rather than detecting D-amino acids in the active site. By recycling D-aminoacyl-tRNA to D-amino acids and free tRNA molecules, this enzyme counteracts the toxicity associated with the formation of D-aminoacyl-tRNA entities in vivo and helps enforce protein L-homochirality. This is D-aminoacyl-tRNA deacylase from Shewanella halifaxensis (strain HAW-EB4).